The chain runs to 161 residues: Cyclic pyranopterin monophosphate synthase (161 aa).

Substrate is bound by residues 78 to 80 (LCH) and 116 to 117 (ME). Asp131 is an active-site residue.

It belongs to the MoaC family. In terms of assembly, homohexamer; trimer of dimers.

The catalysed reaction is (8S)-3',8-cyclo-7,8-dihydroguanosine 5'-triphosphate = cyclic pyranopterin phosphate + diphosphate. It participates in cofactor biosynthesis; molybdopterin biosynthesis. Catalyzes the conversion of (8S)-3',8-cyclo-7,8-dihydroguanosine 5'-triphosphate to cyclic pyranopterin monophosphate (cPMP). This is Cyclic pyranopterin monophosphate synthase from Bordetella pertussis (strain Tohama I / ATCC BAA-589 / NCTC 13251).